We begin with the raw amino-acid sequence, 38 residues long: Defensin D7 (38 aa).

This sequence belongs to the DEFL family. Group IV subfamily. Distributed in the epidermal cell layer of leaves and in the subepidermal layer region of stems. Not in roots.

It is found in the secreted. It localises to the cell wall. In terms of biological role, antimicrobial peptide. Active against Fusarium spp., Gram-positive and Gram-negative bacterial pathogens. The chain is Defensin D7 from Spinacia oleracea (Spinach).